The sequence spans 1012 residues: Structural polyprotein (1012 aa).

Asp-30 is a binding site for a divalent metal cation. Residues 513-755 (ADKGYEVVAN…AGRQYHLAMA (243 aa)) form the Peptidase S50 domain. Ser-652 acts as the Nucleophile in catalysis. The active site involves Lys-692. Residues 969–1012 (AMELKHRNPRRAPPKPKPKPNAPTQRPPGRLGRWIRTVSDEDLE) form a disordered region. Residues 975-986 (RNPRRAPPKPKP) are compositionally biased toward basic residues. The segment at 1003–1012 (IRTVSDEDLE) is interaction with VP1 protein.

As to quaternary structure, homotrimer. A central divalent metal stabilizes the VP2 trimer. Interacts with host ITGA4/ITGB1. In terms of assembly, homodimer. Interacts (via C-terminus) with VP1 in the cytoplasm. Interacts with VP2. Post-translationally, specific enzymatic cleavages yield mature proteins. The capsid assembly seems to be regulated by polyprotein processing. The protease VP4 cleaves itself off the polyprotein, thus releasing pre-VP2 and VP3 within the infected cell. During capsid assembly, the C-terminus of pre-VP2 is further processed by VP4, giving rise to VP2, the external capsid protein and three small peptides that all stay closely associated with the capsid.

It is found in the virion. Its subcellular location is the host cytoplasm. Functionally, capsid protein VP2 self assembles to form an icosahedral capsid with a T=13 symmetry, about 70 nm in diameter, and consisting of 260 VP2 trimers. The capsid encapsulates the genomic dsRNA. VP2 is also involved in attachment and entry into the host cell by interacting with host ITGA4/ITGB1. In terms of biological role, the precursor of VP2 plays an important role in capsid assembly. First, pre-VP2 and VP2 oligomers assemble to form a procapsid. Then, the pre-VP2 intermediates may be processed into VP2 proteins by proteolytic cleavage mediated by VP4 to obtain the mature virion. The final capsid is composed of pentamers and hexamers but VP2 has a natural tendency to assemble into all-pentameric structures. Therefore pre-VP2 may be required to allow formation of the hexameric structures. Its function is as follows. Protease VP4 is a serine protease that cleaves the polyprotein into its final products. Pre-VP2 is first partially cleaved, and may be completely processed by VP4 upon capsid maturation. Capsid protein VP3 plays a key role in virion assembly by providing a scaffold for the capsid made of VP2. May self-assemble to form a T=4-like icosahedral inner-capsid composed of at least 180 trimers. Plays a role in genomic RNA packaging by recruiting VP1 into the capsid and interacting with the dsRNA genome segments to form a ribonucleoprotein complex. Additionally, the interaction of the VP3 C-terminal tail with VP1 removes the inherent structural blockade of the polymerase active site. Thus, VP3 can also function as a transcriptional activator. Functionally, structural peptide 1 is a small peptide derived from pre-VP2 C-terminus. It destabilizes and perforates cell membranes, suggesting a role during entry. In terms of biological role, structural peptide 2 is a small peptide derived from pVP2 C-terminus. It is not essential for the virus viability, but viral growth is affected when missing. Its function is as follows. Structural peptide 3 is a small peptide derived from pVP2 C-terminus. It is not essential for the virus viability, but viral growth is affected when missing. Structural peptide 4 is a small peptide derived from pVP2 C-terminus. It is essential for the virus viability. The sequence is that of Structural polyprotein from Avian infectious bursal disease virus (strain STC) (IBDV).